Here is a 383-residue protein sequence, read N- to C-terminus: ATP phosphoribosyltransferase regulatory subunit (383 aa).

It belongs to the class-II aminoacyl-tRNA synthetase family. HisZ subfamily. Heteromultimer composed of HisG and HisZ subunits.

The protein localises to the cytoplasm. Its pathway is amino-acid biosynthesis; L-histidine biosynthesis; L-histidine from 5-phospho-alpha-D-ribose 1-diphosphate: step 1/9. Functionally, required for the first step of histidine biosynthesis. May allow the feedback regulation of ATP phosphoribosyltransferase activity by histidine. This Neisseria meningitidis serogroup C (strain 053442) protein is ATP phosphoribosyltransferase regulatory subunit.